The chain runs to 370 residues: MAVTVEEAPWLGWIVAKALMRFAFMVANNLVAIPSYICYVIILQPLRVLDSKRFWYIEGLMYKWLLGMVASWGWYAGYTVMEWGEDIKAIAKDEAVMLVNHQATGDVCTLMMCLQDKGPVVAQMMWLMDHIFKYTNFGIVSLIHGDFFIRQGRAYRDQQLLVLKKHLEHNYRSRDRKWIVLFPEGGFLRKRRETSQAFAKKNNLPFLTHVTLPRFGATNIILKALVARQENGSPAGGDARGLECKSRGLQWIIDTTIAYPKAEPIDIQTWILGYRKPTVTHVHYRIFPIGDVPLETEDLTSWLYQRFIEKEDLLSHFYKTGAFPPPQGQKEAVCREMTLSNMWIFLIQSFAFLSGYLWYHIIQYFYHCLF.

Residues 22–42 traverse the membrane as a helical segment; the sequence is FAFMVANNLVAIPSYICYVII. The short motif at 101-106 is the HXXXXD motif element; sequence HQATGD. Residues 342 to 362 traverse the membrane as a helical segment; that stretch reads MWIFLIQSFAFLSGYLWYHII.

It belongs to the 1-acyl-sn-glycerol-3-phosphate acyltransferase family. Ubiquitous. Expressed in heart, kidney, liver, skin, intestine, and thymus. Highest expression is detected in brain and testis.

The protein localises to the endoplasmic reticulum membrane. The enzyme catalyses a 2-acyl-sn-glycero-3-phosphoethanolamine + octadecanoyl-CoA = 1-octadecanoyl-2-acyl-sn-glycero-3-phosphoethanolamine + CoA. It catalyses the reaction 2-(9Z-octadecenoyl)-sn-glycero-3-phosphoethanolamine + octadecanoyl-CoA = 1-octadecanoyl-2-(9Z-octadecenoyl)-sn-glycero-3-phosphoethanolamine + CoA. It carries out the reaction a 2-acyl-sn-glycero-3-phosphoethanolamine + hexadecanoyl-CoA = 1-hexadecanoyl-2-acyl-sn-glycero-3-phosphoethanolamine + CoA. The catalysed reaction is 2-(9Z-octadecenoyl)-sn-glycero-3-phosphoethanolamine + hexadecanoyl-CoA = 1-hexadecanoyl-2-(9Z-octadecenoyl)-sn-glycero-3-phosphoethanolamine + CoA. The enzyme catalyses 1-tetradecanoyl-sn-glycero-3-phospho-(1'-sn-glycerol) + hexadecanoyl-CoA = 1-tetradecanoyl-2-hexadecanoyl-sn-glycero-3-phospho-(1'-sn-glycerol) + CoA. It catalyses the reaction 1-hexadecanoyl-sn-glycero-3-phospho-(1'-sn-glycerol) + dodecanoyl-CoA = 1-hexadecanoyl-2-dodecanoyl-sn-glycero-3-phospho-(1'-sn-glycerol) + CoA. It carries out the reaction 1-hexadecanoyl-sn-glycero-3-phospho-(1'-sn-glycerol) + hexadecanoyl-CoA = 1,2-dihexadecanoyl-sn-glycero-3-phospho-(1'-sn-glycerol) + CoA. The catalysed reaction is 1-hexadecanoyl-sn-glycero-3-phospho-(1'-sn-glycerol) + octadecanoyl-CoA = 1-hexadecanoyl-2-octadecanoyl-sn-glycero-3-phospho-(1'-sn-glycerol) + CoA. The enzyme catalyses 1-octadecanoyl-sn-glycero-3-phospho-(1'-sn-glycerol) + hexadecanoyl-CoA = 1-octadecanoyl-2-hexadecanoyl-sn-glycero-3-phospho-(1'-sn-glycerol) + CoA. It catalyses the reaction 1-(9Z-octadecenoyl)-sn-glycero-3-phospho-(1'-sn-glycerol) + dodecanoyl-CoA = 1-(9Z-octadecenoyl)-2-dodecanoyl-sn-glycero-3-phospho-(1'-sn-glycerol) + CoA. It carries out the reaction 1-hexadecanoyl-sn-glycero-3-phospho-(1'-sn-glycerol) + (9Z)-octadecenoyl-CoA = 1-hexadecanoyl-2-(9Z-octadecenoyl)-sn-glycero-3-phospho-(1'-sn-glycerol) + CoA. The catalysed reaction is 1-(9Z-octadecenoyl)-sn-glycero-3-phospho-(1'-sn-glycerol) + hexadecanoyl-CoA = 1-(9Z-octadecenoyl)-2-hexadecanoyl-sn-glycero-3-phospho-(1'-sn-glycerol) + CoA. The enzyme catalyses 1-(9Z-octadecenoyl)-sn-glycero-3-phospho-(1'-sn-glycerol) + (9Z)-octadecenoyl-CoA = 1,2-di-(9Z-octadecenoyl)-sn-glycero-3-phospho-(1'-sn-glycerol) + CoA. It catalyses the reaction a 2-acylglycerol + an acyl-CoA = a 1,2-diacylglycerol + CoA. It carries out the reaction a 2-acylglycerol + hexadecanoyl-CoA = a 1-hexadecanoyl-2-acylglycerol + CoA. The catalysed reaction is a 1-acylglycerol + hexadecanoyl-CoA = an hexadecanoyl-acylglycerol + CoA. The enzyme catalyses a 2-acyl-sn-glycero-3-phosphocholine + an acyl-CoA = a 1,2-diacyl-sn-glycero-3-phosphocholine + CoA. It catalyses the reaction 2-(9Z-octadecenoyl)-sn-glycero-3-phosphocholine + octadecanoyl-CoA = 1-octadecanoyl-2-(9Z-octadecenoyl)-sn-glycero-3-phosphocholine + CoA. It carries out the reaction 2-(9Z,12Z-octadecadienoyl)-sn-glycero-3-phosphocholine + octadecanoyl-CoA = 1-octadecanoyl-2-(9Z,12Z)-octadecadienoyl-sn-glycero-3-phosphocholine + CoA. The catalysed reaction is 2-(5Z,8Z,11Z,14Z)-eicosatetraenoyl-sn-glycero-3-phosphocholine + octadecanoyl-CoA = 1-octadecanoyl-2-(5Z,8Z,11Z,14Z-eicosatetraenoyl)-sn-glycero-3-phosphocholine + CoA. The enzyme catalyses 2-(9Z-octadecenoyl)-sn-glycero-3-phosphocholine + hexadecanoyl-CoA = 1-hexadecanoyl-2-(9Z-octadecenoyl)-sn-glycero-3-phosphocholine + CoA. It catalyses the reaction 2-(9Z-octadecenoyl)-sn-glycero-3-phospho-L-serine + hexadecanoyl-CoA = 1-hexadecanoyl-2-(9Z-octadecenoyl)-sn-glycero-3-phospho-L-serine + CoA. It carries out the reaction 2-(4Z,7Z,10Z,13Z,16Z,19Z-docosahexaenoyl)-sn-glycero-3-phosphocholine + octadecanoyl-CoA = 1-octadecanoyl-2-(4Z,7Z,10Z,13Z,16Z,19Z-docosahexaenoyl)-sn-glycero-3-phosphocholine + CoA. The catalysed reaction is 1-(9Z-octadecenoyl)-sn-glycero-3-phospho-L-serine + octadecanoyl-CoA = 1-(9Z-octadecenoyl)-2-octadecanoyl-sn-glycero-3-phospho-L-serine + CoA. The enzyme catalyses a 2-acyl-sn-glycero-3-phosphoethanolamine + a fatty acyl-CoA = a 1,2-diacyl-sn-glycero-3-phosphoethanolamine + CoA. Lysophospholipid acyltransferase involved in fatty acyl chain remodeling of glycerophospholipids in the endoplasmic reticulum membrane. Selectively catalyzes the transfer and esterification of saturated long-chain fatty acids from acyl-CoA to the sn-1 position of 1-lyso-2-acyl phosphatidylethanolamines (1-lyso-PE, LPE), with a preference for stearoyl CoA over palmitoyl CoA as acyl donor. Acts in concert with an unknown phospholipase A1 to convert palmitate PE species into stearate ones. Provides substrates to the PE methylation pathway, controlling stearate/palmitate composition of PE and phosphatidylcholine (PC) species with an overall impact on de novo hepatic lipid synthesis, body fat content and life span. Can acylate lysophosphatidylglycerols (LPG) using various saturated fatty acyl-CoAs as acyl donors. Can also acylate monoacylglycerols with a preference for 2-monoacylglycerols over 1-monoacylglycerols. Has no activity toward lysophosphatidic acids (LPA) and lysophosphatidylcholines (LPC). The polypeptide is Acyl-CoA:lysophosphatidylglycerol acyltransferase 1 (Mus musculus (Mouse)).